The sequence spans 168 residues: Peroxynitrite isomerase (168 aa).

Residues 25-31 carry the GXWXGXG motif; the sequence is GTWRGAG. Residue histidine 160 coordinates heme b.

This sequence belongs to the nitrobindin family. In terms of assembly, homodimer. Heme b is required as a cofactor.

The enzyme catalyses peroxynitrite = nitrate. It functions in the pathway nitrogen metabolism. Its function is as follows. Heme-binding protein able to scavenge peroxynitrite and to protect free L-tyrosine against peroxynitrite-mediated nitration, by acting as a peroxynitrite isomerase that converts peroxynitrite to nitrate. Therefore, this protein likely plays a role in peroxynitrite sensing and in the detoxification of reactive nitrogen and oxygen species (RNS and ROS, respectively). Is able to bind nitric oxide (NO) in vitro, but may act as a sensor of peroxynitrite levels in vivo. The sequence is that of Peroxynitrite isomerase from Nocardia farcinica (strain IFM 10152).